The chain runs to 62 residues: MTLAFQLAVFALIATSSILLIGVPVVFASPDGWSSNKNVLFSGTSLWIGLVFLVGILNSLIS.

The next 2 membrane-spanning stretches (helical) occupy residues 8-28 (AVFA…VVFA) and 41-61 (FSGT…NSLI).

It belongs to the PsbZ family. As to quaternary structure, PSII is composed of 1 copy each of membrane proteins PsbA, PsbB, PsbC, PsbD, PsbE, PsbF, PsbH, PsbI, PsbJ, PsbK, PsbL, PsbM, PsbT, PsbY, PsbZ, Psb30/Ycf12, at least 3 peripheral proteins of the oxygen-evolving complex and a large number of cofactors. It forms dimeric complexes.

The protein resides in the plastid. The protein localises to the chloroplast thylakoid membrane. Functionally, may control the interaction of photosystem II (PSII) cores with the light-harvesting antenna, regulates electron flow through the 2 photosystem reaction centers. PSII is a light-driven water plastoquinone oxidoreductase, using light energy to abstract electrons from H(2)O, generating a proton gradient subsequently used for ATP formation. The protein is Photosystem II reaction center protein Z of Daucus carota (Wild carrot).